A 157-amino-acid chain; its full sequence is Ubiquitin-like protein 4A (157 aa).

Residues 1-76 (MQLTVKALQG…LNLVVKPLEK (76 aa)) form the Ubiquitin-like domain. Lys48 is covalently cross-linked (Glycyl lysine isopeptide (Lys-Gly) (interchain with G-Cter in ubiquitin)). Ser90 carries the post-translational modification Phosphoserine. The required and sufficient for interaction with BAG6 stretch occupies residues 96–138 (WQLISKVLARHFSVADASRVLEQLQRDYDRSLSRLTLDDIERL).

Component of the BAG6/BAT3 complex, at least composed of BAG6, UBL4A and GET4/TRC35. Interacts with BAG6; the interaction is direct and required for UBL4A protein stability. Interacts with USP13; may be indirect via BAG6. Post-translationally, polyubiquitinated. Ubiquitination by AMFR and deubiquitination by USP13 may regulate the interaction between the BAG6/BAT3 complex and SGTA and therefore may regulate client proteins fate.

The protein resides in the cytoplasm. It localises to the cytosol. The protein localises to the nucleus. Its function is as follows. As part of a cytosolic protein quality control complex, the BAG6/BAT3 complex, maintains misfolded and hydrophobic patches-containing proteins in a soluble state and participates in their proper delivery to the endoplasmic reticulum or alternatively can promote their sorting to the proteasome where they undergo degradation. The BAG6/BAT3 complex is involved in the post-translational delivery of tail-anchored/type II transmembrane proteins to the endoplasmic reticulum membrane. Recruited to ribosomes, it interacts with the transmembrane region of newly synthesized tail-anchored proteins and together with SGTA and ASNA1 mediates their delivery to the endoplasmic reticulum. Client proteins that cannot be properly delivered to the endoplasmic reticulum are ubiquitinated and sorted to the proteasome. Similarly, the BAG6/BAT3 complex also functions as a sorting platform for proteins of the secretory pathway that are mislocalized to the cytosol either delivering them to the proteasome for degradation or to the endoplasmic reticulum. The BAG6/BAT3 complex also plays a role in the endoplasmic reticulum-associated degradation (ERAD), a quality control mechanism that eliminates unwanted proteins of the endoplasmic reticulum through their retrotranslocation to the cytosol and their targeting to the proteasome. It maintains these retrotranslocated proteins in an unfolded yet soluble state condition in the cytosol to ensure their proper delivery to the proteasome. The polypeptide is Ubiquitin-like protein 4A (Mus musculus (Mouse)).